Reading from the N-terminus, the 1159-residue chain is Caspase recruitment domain-containing protein 11 (1159 aa).

One can recognise a CARD domain in the interval 18 to 110 (EEEALWDNVE…ELYKLVTGKE (93 aa)). A linker region spans residues 111-128 (PTRRFSTIVVEEGHEGLT). The stretch at 176–449 (FQERYYKMKE…KDNGSLDQSL (274 aa)) forms a coiled coil. The segment at 441 to 496 (DNGSLDQSLPRHLPATIISQNLGDTSPRTNGQEADDSSTSEESPEDSKYFLPYHPP) is disordered. Residues S448 and S466 each carry the phosphoserine modification. Positions 450 to 671 (PRHLPATIIS…GHVRGTGPLV (222 aa)) are inhibitory domain (ID). Polar residues predominate over residues 457-472 (IISQNLGDTSPRTNGQ). Residues 473–484 (EADDSSTSEESP) show a composition bias toward acidic residues. 2 positions are modified to phosphoserine: S512 and S540. The interval 532 to 578 (HEEDFTDGSPSSSRSLPVTSSFSKMQPHRSRSSIMSITAEPPGNDSI) is disordered. Over residues 540-554 (SPSSSRSLPVTSSFS) the composition is skewed to low complexity. Position 564 is a phosphoserine; by PKC/PRKCB and PKC/PRKCQ (S564). Residue S598 is modified to Phosphoserine. The interval 610-631 (NHERYSFGPPSIHSSSSSHQSE) is disordered. Positions 620–630 (SIHSSSSSHQS) are enriched in low complexity. Phosphoserine; by PKC/PRKCB and PKC/PRKCQ is present on residues S649 and S657. The 89-residue stretch at 672-760 (QHTTLNGDGL…LITLHYKVNH (89 aa)) folds into the PDZ domain. Residues S891 and S930 each carry the phosphoserine modification. Residues 978 to 1145 (RRRPVLFTPT…LLRVLKDKIV (168 aa)) form the Guanylate kinase-like domain.

Homodimer; disulfide-linked. Homomultimer; polymerizes following activation, forming a nucleating helical template that seeds BCL10-filament formation via a CARD-CARD interaction. Interacts (via CARD domain) with BCL10 (via CARD domain); interaction takes place following CARD11 activation and polymerization, leading to the formation of a filamentous CBM complex assembly. Component of a CBM complex (CARD11-BCL10-MALT1) complex involved in NF-kappa-B activation. Found in a membrane raft complex, at least composed of BCL10, CARD11, DPP4 and IKBKB. Interacts (via PDZ domain) with DPP4 (via cytoplasmic tail). In terms of processing, phosphorylation at Ser-564, Ser-649 and Ser-657 by PRKCB and PRKCQ leads to a shift from an inactive to an active form that activates the NF-kappa-B signaling.

Its subcellular location is the cytoplasm. The protein resides in the membrane raft. With respect to regulation, maintained in an autoinhibited state via homodimerization in which the CARD domain forms an extensive interaction with the adjacent linker and coiled-coil regions. Activation downstream of T-cell receptor (TCR) by phosphorylation by PRKCB and PRKCQ triggers CARD11 homooligomerization and BCL10 recruitment, followed by activation of NF-kappa-B. Adapter protein that plays a key role in adaptive immune response by transducing the activation of NF-kappa-B downstream of T-cell receptor (TCR) and B-cell receptor (BCR) engagement. Transduces signals downstream TCR or BCR activation via the formation of a multiprotein complex together with BCL10 and MALT1 that induces NF-kappa-B and MAP kinase p38 (MAPK11, MAPK12, MAPK13 and/or MAPK14) pathways. Upon activation in response to TCR or BCR triggering, CARD11 homooligomerizes to form a nucleating helical template that recruits BCL10 via CARD-CARD interaction, thereby promoting polymerization of BCL10 and subsequent recruitment of MALT1: this leads to I-kappa-B kinase (IKK) phosphorylation and degradation, and release of NF-kappa-B proteins for nuclear translocation. Its binding to DPP4 induces T-cell proliferation and NF-kappa-B activation in a T-cell receptor/CD3-dependent manner. Promotes linear ubiquitination of BCL10 by promoting the targeting of BCL10 to RNF31/HOIP. Stimulates the phosphorylation of BCL10. Also activates the TORC1 signaling pathway. The polypeptide is Caspase recruitment domain-containing protein 11 (Mus musculus (Mouse)).